The following is a 219-amino-acid chain: Small ribosomal subunit protein uS4 (219 aa).

Positions 112–174 (RRLQTQVLRL…GSSPLMSESH (63 aa)) constitute an S4 RNA-binding domain. The segment at 193 to 219 (KAAAEAKQARERPPERGGGRKKRGGRR) is disordered. Positions 199 to 210 (KQARERPPERGG) are enriched in basic and acidic residues.

This sequence belongs to the universal ribosomal protein uS4 family. Part of the 30S ribosomal subunit. Contacts protein S5. The interaction surface between S4 and S5 is involved in control of translational fidelity.

One of the primary rRNA binding proteins, it binds directly to 16S rRNA where it nucleates assembly of the body of the 30S subunit. Its function is as follows. With S5 and S12 plays an important role in translational accuracy. The protein is Small ribosomal subunit protein uS4 of Methanosarcina mazei (strain ATCC BAA-159 / DSM 3647 / Goe1 / Go1 / JCM 11833 / OCM 88) (Methanosarcina frisia).